The primary structure comprises 352 residues: Fatty acid desaturase (352 aa).

2 helical membrane passes run 28–48 (SLIQLLNTFIPFFGLWFLAYL) and 55–75 (LLTLALTVIAAGFLTRIFIIF). The Histidine box-1 signature appears at 76–80 (HDCCH). The chain crosses the membrane as a helical span at residues 89–109 (YNHILGFLTGVLTLFPYLQWQ). The Histidine box-2 motif lies at 112–116 (HSIHH). A run of 3 helical transmembrane segments spans residues 151 to 171 (LYRNPFIMFILGPIYVFLITN), 186 to 206 (TYLTNLAIVALAAACCLIFGW), and 209 to 229 (FLLVQGPIFLISGSIGVWLFY). The Histidine box-3 signature appears at 274-278 (HHVHH).

Belongs to the fatty acid desaturase type 1 family.

It localises to the cell membrane. It participates in lipid metabolism; fatty acid metabolism. In terms of biological role, catalyzes the introduction of a cis-double bond at the delta(5) position of existing saturated fatty acids attached to membrane phospholipids. It is not strictly specific for palmitic acid (C16) but can also accept C14 as well as C18 species to yield unsaturated fatty acids. This is Fatty acid desaturase (des) from Bacillus subtilis (strain 168).